The sequence spans 146 residues: Angiogenin (146 aa).

The signal sequence occupies residues 1-24 (MVMGPHLLLLVFILGLGLTPPTLA). The residue at position 25 (glutamine 25) is a Pyrrolidone carboxylic acid. Residue histidine 37 is the Proton acceptor of the active site. 3 disulfide bridges follow: cysteine 50-cysteine 105, cysteine 63-cysteine 116, and cysteine 81-cysteine 131. Residues 55–59 (RLRNM) carry the Nucleolar localization signal motif. Residues cysteine 105 and isoleucine 127 each coordinate tRNA. Catalysis depends on histidine 138, which acts as the Proton donor.

Belongs to the pancreatic ribonuclease family. As to quaternary structure, homodimer. Interacts with RNH1; inhibiting ANG ribonuclease activity. Interacts with PCNA.

It is found in the secreted. It localises to the nucleus. The protein localises to the nucleolus. The protein resides in the cytoplasm. Its subcellular location is the stress granule. Its activity is regulated as follows. Has weak tRNA ribonuclease activity by itself due to partial autoinhibition by its C-terminus, which folds into a short alpha-helix that partially occludes the substrate-binding site. In absence of stress, the ribonuclease activity is inhibited by RNH1 in the cytoplasm. In response to stress, dissociates from RNH1 in the cytoplasm and associates with cytoplasmic ribosomes with vacant A-sites: ribosomes directly activate the tRNA ribonuclease activity of ANG by refolding the C-terminal alpha-helix. In response to stress, the angiogenic activity of ANG is inhibited by RNH1 in the nucleus. In terms of biological role, secreted ribonuclease that can either promote or restrict cell proliferation of target cells, depending on the context. Endocytosed in target cells via its receptor PLXNB2 and translocates to the cytoplasm or nucleus. Under stress conditions, localizes to the cytoplasm and promotes the assembly of stress granules (SGs): specifically cleaves a subset of tRNAs within anticodon loops to produce tRNA-derived stress-induced fragments (tiRNAs), resulting in translation repression and inhibition of cell proliferation. tiRNas also prevent formation of apoptosome, thereby promoting cell survival. Preferentially cleaves RNAs between a pyrimidine and an adenosine residue, suggesting that it cleaves the anticodon loop of tRNA(Ala) (32-UUAGCAU-38) after positions 33 and 36. Cleaves a subset of tRNAs, including tRNA(Ala), tRNA(Glu), tRNA(Gly), tRNA(Lys), tRNA(Val), tRNA(His), tRNA(Asp) and tRNA(Sec). Under growth conditions and in differentiated cells, translocates to the nucleus and stimulates ribosomal RNA (rRNA) transcription, including that containing the initiation site sequences of 45S rRNA, thereby promoting cell growth and proliferation. Angiogenin induces vascularization of normal and malignant tissues via its ability to promote rRNA transcription. Involved in hematopoietic stem and progenitor cell (HSPC) growth and survival by promoting rRNA transcription in growth conditions and inhibiting translation in response to stress, respectively. Mediates the crosstalk between myeloid and intestinal epithelial cells to protect the intestinal epithelial barrier integrity: secreted by myeloid cells and promotes intestinal epithelial cells proliferation and survival. Also mediates osteoclast-endothelial cell crosstalk in growing bone: produced by osteoclasts and protects the neighboring vascular cells against senescence by promoting rRNA transcription. This Saimiri sciureus (Common squirrel monkey) protein is Angiogenin (ANG).